The following is a 347-amino-acid chain: Heat-inducible transcription repressor HrcA (347 aa).

The protein belongs to the HrcA family.

Its function is as follows. Negative regulator of class I heat shock genes (grpE-dnaK-dnaJ and groELS operons). Prevents heat-shock induction of these operons. The protein is Heat-inducible transcription repressor HrcA of Sorangium cellulosum (strain So ce56) (Polyangium cellulosum (strain So ce56)).